A 211-amino-acid polypeptide reads, in one-letter code: Protein DEHYDRATION-INDUCED 19 homolog 7 (211 aa).

Thr-113 carries the post-translational modification Phosphothreonine. A disordered region spans residues 163–194 (GDSVAQVSPKDTSKSKIQQESFSNEDQEKAKK). Residues 167-186 (AQVSPKDTSKSKIQQESFSN) show a composition bias toward polar residues.

The protein belongs to the Di19 family. In terms of processing, not phosphorylated in vitro by CPK3 or CPK11. In terms of tissue distribution, expressed in seedlings, roots, leaves, stems, flowers and siliques.

It is found in the nucleus. Its function is as follows. Involved in both red and blue light signaling. In Arabidopsis thaliana (Mouse-ear cress), this protein is Protein DEHYDRATION-INDUCED 19 homolog 7 (DI19-7).